The sequence spans 352 residues: Keratocan (352 aa).

The signal sequence occupies residues 1–20; it reads MAGTICFIMWVLFITDTVWS. In terms of domain architecture, LRRNT spans 33-71; sequence DDWTIHDFECPMECFCPPSFPTALYCENRGLKEIPAIPS. 2 disulfide bridges follow: Cys-42/Cys-48 and Cys-46/Cys-58. LRR repeat units follow at residues 72–93, 96–117, 122–142, 143–164, 167–180, 193–213, 214–235, 238–258, 263–282, and 283–304; these read RIWY…PFEN, QLRW…KGAL, KLLF…PLPR, SLEQ…TFSN, NLTL…KLVD, NLMQ…RLPA, NTMQ…YFNV, KVAF…PSRG, SILD…RISA, and HLQH…VICP. An N-linked (GlcNAc...) (keratan sulfate) asparagine glycan is attached at Asn-93. Asn-167 is a glycosylation site (N-linked (GlcNAc...) (keratan sulfate) asparagine). Asn-222 carries N-linked (GlcNAc...) asparagine glycosylation. N-linked (GlcNAc...) asparagine glycosylation occurs at Asn-298. An intrachain disulfide couples Cys-303 to Cys-343.

This sequence belongs to the small leucine-rich proteoglycan (SLRP) family. SLRP class II subfamily. Binds keratan sulfate chains. Cornea (at protein level). Increased expression in the stroma of keratoconus corneas. Also detected in trachea, and in low levels, in intestine, skeletal muscle, ovary, lung and putamen.

It is found in the secreted. The protein localises to the extracellular space. It localises to the extracellular matrix. Its function is as follows. May be important in developing and maintaining corneal transparency and for the structure of the stromal matrix. The polypeptide is Keratocan (KERA) (Homo sapiens (Human)).